The following is a 368-amino-acid chain: DNA replication and repair protein RecF (368 aa).

30–37 (GNNAQGKT) contributes to the ATP binding site.

This sequence belongs to the RecF family.

Its subcellular location is the cytoplasm. Its function is as follows. The RecF protein is involved in DNA metabolism; it is required for DNA replication and normal SOS inducibility. RecF binds preferentially to single-stranded, linear DNA. It also seems to bind ATP. The chain is DNA replication and repair protein RecF from Streptococcus pyogenes serotype M49 (strain NZ131).